The following is a 411-amino-acid chain: Na(+)-translocating NADH-quinone reductase subunit F (411 aa).

The chain crosses the membrane as a helical span at residues 5–25; that stretch reads VILALGIAAFTVIVLVLVAII. The 95-residue stretch at 36 to 130 folds into the 2Fe-2S ferredoxin-type domain; that stretch reads GDITIGINDD…NMEVELPEEI (95 aa). [2Fe-2S] cluster contacts are provided by Cys-73, Cys-79, Cys-82, and Cys-114. Residues 133-273 form the FAD-binding FR-type domain; sequence VKKWECTVIS…SGPFGEFFAK (141 aa).

This sequence belongs to the NqrF family. Composed of six subunits; NqrA, NqrB, NqrC, NqrD, NqrE and NqrF. Requires [2Fe-2S] cluster as cofactor. The cofactor is FAD.

It localises to the cell inner membrane. It catalyses the reaction a ubiquinone + n Na(+)(in) + NADH + H(+) = a ubiquinol + n Na(+)(out) + NAD(+). In terms of biological role, NQR complex catalyzes the reduction of ubiquinone-1 to ubiquinol by two successive reactions, coupled with the transport of Na(+) ions from the cytoplasm to the periplasm. The first step is catalyzed by NqrF, which accepts electrons from NADH and reduces ubiquinone-1 to ubisemiquinone by a one-electron transfer pathway. The sequence is that of Na(+)-translocating NADH-quinone reductase subunit F from Haemophilus influenzae (strain PittEE).